The following is a 421-amino-acid chain: Phosphoribosylamine--glycine ligase (421 aa).

The 207-residue stretch at 108–314 (KEIMVKYNVP…FAQNIDDIMM (207 aa)) folds into the ATP-grasp domain. Position 134–195 (134–195 (IEEQGAPIVV…EEFLDGEEFS (62 aa))) interacts with ATP. Mg(2+) contacts are provided by glutamate 284 and asparagine 286.

It belongs to the GARS family. Mg(2+) serves as cofactor. Requires Mn(2+) as cofactor.

The enzyme catalyses 5-phospho-beta-D-ribosylamine + glycine + ATP = N(1)-(5-phospho-beta-D-ribosyl)glycinamide + ADP + phosphate + H(+). It participates in purine metabolism; IMP biosynthesis via de novo pathway; N(1)-(5-phospho-D-ribosyl)glycinamide from 5-phospho-alpha-D-ribose 1-diphosphate: step 2/2. This Streptococcus pyogenes serotype M1 protein is Phosphoribosylamine--glycine ligase.